Here is a 104-residue protein sequence, read N- to C-terminus: Colipase-like protein 2 (104 aa).

An N-terminal signal peptide occupies residues 1–19 (MAFTQALVTVLAFLVGTLP). 5 disulfides stabilise this stretch: Cys38–Cys49, Cys44–Cys60, Cys48–Cys82, Cys70–Cys90, and Cys84–Cys101.

Belongs to the colipase family.

The protein resides in the secreted. The chain is Colipase-like protein 2 (Clpsl2) from Rattus norvegicus (Rat).